Here is a 428-residue protein sequence, read N- to C-terminus: Enolase (428 aa).

Gln163 provides a ligand contact to (2R)-2-phosphoglycerate. The active-site Proton donor is the Glu205. Mg(2+) is bound by residues Asp242, Glu286, and Asp313. Residues Lys338, Arg367, Ser368, and Lys389 each contribute to the (2R)-2-phosphoglycerate site. Lys338 functions as the Proton acceptor in the catalytic mechanism.

This sequence belongs to the enolase family. The cofactor is Mg(2+).

Its subcellular location is the cytoplasm. It localises to the secreted. The protein resides in the cell surface. It carries out the reaction (2R)-2-phosphoglycerate = phosphoenolpyruvate + H2O. It participates in carbohydrate degradation; glycolysis; pyruvate from D-glyceraldehyde 3-phosphate: step 4/5. Functionally, catalyzes the reversible conversion of 2-phosphoglycerate (2-PG) into phosphoenolpyruvate (PEP). It is essential for the degradation of carbohydrates via glycolysis. The chain is Enolase from Acidovorax ebreus (strain TPSY) (Diaphorobacter sp. (strain TPSY)).